We begin with the raw amino-acid sequence, 306 residues long: Glutaminase (306 aa).

Residues serine 61, asparagine 111, glutamate 157, asparagine 164, tyrosine 188, tyrosine 240, and valine 258 each coordinate substrate.

The protein belongs to the glutaminase family. As to quaternary structure, homotetramer.

It catalyses the reaction L-glutamine + H2O = L-glutamate + NH4(+). The polypeptide is Glutaminase (Pseudoalteromonas atlantica (strain T6c / ATCC BAA-1087)).